Consider the following 469-residue polypeptide: Tubulin gamma chain (469 aa).

A GTP-binding site is contributed by 142-148 (AGGTGSG).

It belongs to the tubulin family.

The protein localises to the cytoplasm. It is found in the cytoskeleton. The protein resides in the microtubule organizing center. Its subcellular location is the spindle pole body. Tubulin is the major constituent of microtubules. The gamma chain is found at microtubule organizing centers (MTOC) such as the spindle poles or the centrosome, suggesting that it is involved in the minus-end nucleation of microtubule assembly. This chain is Tubulin gamma chain (TUB4), found in Microbotryum violaceum (Anther smut fungus).